The following is a 654-amino-acid chain: MAPTQPQTKVRKPPRSWDALTPPLAQWILDYLSSMGFTQPTPVQKSCLELFRGNKDVVVEAVTGSGKTLAFLIPVVEKLLRGEEPAKRNHVQGIIISPTRELATQIYNVLVSLVKFHEPSAEAISHAKSDEKRPTATQPVVVPQLLVGGTTKAAEDLGTFLRLSPNLLIGTPGRLAELLSSAYVKAPASTFEVLIMDEADRLLDMGFANELNRILGYLPKQRRTGLFSASLSDAVERLITVGLLYPHKITVRVKSLKDGGIIQERKTPMSLQMSYLVTPASQKMPAIVQLLEKLEPRPQRSIIFFSSCMAVKYFSRILGAVLPAGFSVTSLHGKLEPKVREKNYERFVNTTSPMVLLTTDLAARGLDIPQVDLVIQHDPPTDTKVFIHRCGRAGRAGRRGLAVVLLQPGREEGYVQLLEVRQTPITPLEKPAISVTPDEVERVSAAFRSQALADREIFQMAQLAFVSWTRSYIEHQASSIFRIADLDWLDLAKGYGLLELPKMPEVREAKIDRSLGLGINTEEIPFKDKVREKKRQEELAKWKEEKAKRAQEENTGDKRKKNEAWSGKAEQEETKLQRREKKRRKREAKKFSEMTEKEKEEHLKLEQMIEEVRKRNEAKAAEERAAALAANPPKPKAPVKKVDDSDEEFGGFDD.

A Q motif motif is present at residues 17 to 45 (WDALTPPLAQWILDYLSSMGFTQPTPVQK). The Helicase ATP-binding domain maps to 48-249 (LELFRGNKDV…TVGLLYPHKI (202 aa)). Position 61–68 (61–68 (AVTGSGKT)) interacts with ATP. Residues 197 to 200 (DEAD) carry the DEAD box motif. A Helicase C-terminal domain is found at 286 to 444 (AIVQLLEKLE…VTPDEVERVS (159 aa)). Residues 531–631 (REKKRQEELA…EERAAALAAN (101 aa)) are a coiled coil. Residues 542–577 (WKEEKAKRAQEENTGDKRKKNEAWSGKAEQEETKLQ) are compositionally biased toward basic and acidic residues. The disordered stretch occupies residues 542-654 (WKEEKAKRAQ…SDEEFGGFDD (113 aa)). Basic residues predominate over residues 578–588 (RREKKRRKREA). A compositionally biased stretch (basic and acidic residues) spans 589 to 625 (KKFSEMTEKEKEEHLKLEQMIEEVRKRNEAKAAEERA). Acidic residues predominate over residues 644-654 (DSDEEFGGFDD).

This sequence belongs to the DEAD box helicase family. DDX55/SPB4 subfamily. In terms of assembly, component of pre-60S ribosomal complexes.

Its subcellular location is the nucleus. The protein resides in the nucleolus. The catalysed reaction is ATP + H2O = ADP + phosphate + H(+). Functionally, ATP-binding RNA helicase involved in the biogenesis of 60S ribosomal subunits. Binds 90S pre-ribosomal particles and dissociates from pre-60S ribosomal particles after processing of 27SB pre-rRNA. Required for the normal formation of 18S rRNA through the processing of pre-rRNAs at sites A0, A1 and A2, and the normal formation of 25S and 5.8S rRNAs through the processing of pre-rRNAs at sites C1 and C2. The polypeptide is ATP-dependent rRNA helicase spb-4 (Neurospora crassa (strain ATCC 24698 / 74-OR23-1A / CBS 708.71 / DSM 1257 / FGSC 987)).